Consider the following 310-residue polypeptide: Lipoyl synthase (310 aa).

Residues C61, C66, C72, C87, C91, C94, and S300 each contribute to the [4Fe-4S] cluster site. The region spanning 73–289 is the Radical SAM core domain; that stretch reads FNNGTATFMI…EYIALSLGFS (217 aa).

It belongs to the radical SAM superfamily. Lipoyl synthase family. The cofactor is [4Fe-4S] cluster.

The protein localises to the cytoplasm. It catalyses the reaction [[Fe-S] cluster scaffold protein carrying a second [4Fe-4S](2+) cluster] + N(6)-octanoyl-L-lysyl-[protein] + 2 oxidized [2Fe-2S]-[ferredoxin] + 2 S-adenosyl-L-methionine + 4 H(+) = [[Fe-S] cluster scaffold protein] + N(6)-[(R)-dihydrolipoyl]-L-lysyl-[protein] + 4 Fe(3+) + 2 hydrogen sulfide + 2 5'-deoxyadenosine + 2 L-methionine + 2 reduced [2Fe-2S]-[ferredoxin]. The protein operates within protein modification; protein lipoylation via endogenous pathway; protein N(6)-(lipoyl)lysine from octanoyl-[acyl-carrier-protein]: step 2/2. Functionally, catalyzes the radical-mediated insertion of two sulfur atoms into the C-6 and C-8 positions of the octanoyl moiety bound to the lipoyl domains of lipoate-dependent enzymes, thereby converting the octanoylated domains into lipoylated derivatives. The sequence is that of Lipoyl synthase from Buchnera aphidicola subsp. Cinara cedri (strain Cc).